Reading from the N-terminus, the 206-residue chain is MAAALLRELGALRVPNLRIWATQTLRVLPPSCIHTSASLDISRKWEKKNKIVYPPQLPGEPRRPAEIYHCRRQIKYSKDKMWYLAKMIRGMSIDQALAQLEFNDKKGAQIIKEVLLEAQDMAVRDHNVEFRSNLHIAESTSGRGQCLKRIRYHGRGRFGIMEKVYCHYFVKLVEGPPPPPEVPKTAVDHAKDYIQQLRSRTIIHTL.

A mitochondrion-targeting transit peptide spans methionine 1–aspartate 40.

It belongs to the universal ribosomal protein uL22 family. In terms of assembly, component of the mitochondrial ribosome large subunit (39S) which comprises a 16S rRNA and about 50 distinct proteins.

Its subcellular location is the mitochondrion. The polypeptide is Large ribosomal subunit protein uL22m (Mrpl22) (Mus musculus (Mouse)).